The following is a 446-amino-acid chain: Methylenetetrahydrofolate--tRNA-(uracil-5-)-methyltransferase TrmFO (446 aa).

Residue 9-14 (GGGMAG) participates in FAD binding.

Belongs to the MnmG family. TrmFO subfamily. Requires FAD as cofactor.

It is found in the cytoplasm. It carries out the reaction uridine(54) in tRNA + (6R)-5,10-methylene-5,6,7,8-tetrahydrofolate + NADH + H(+) = 5-methyluridine(54) in tRNA + (6S)-5,6,7,8-tetrahydrofolate + NAD(+). The catalysed reaction is uridine(54) in tRNA + (6R)-5,10-methylene-5,6,7,8-tetrahydrofolate + NADPH + H(+) = 5-methyluridine(54) in tRNA + (6S)-5,6,7,8-tetrahydrofolate + NADP(+). Its function is as follows. Catalyzes the folate-dependent formation of 5-methyl-uridine at position 54 (M-5-U54) in all tRNAs. This is Methylenetetrahydrofolate--tRNA-(uracil-5-)-methyltransferase TrmFO from Ruegeria sp. (strain TM1040) (Silicibacter sp.).